Here is a 488-residue protein sequence, read N- to C-terminus: Secreted triacylglycerol lipase LIP1 (488 aa).

The N-terminal stretch at Met1 to Ala26 is a signal peptide. Cys119 and Cys288 are joined by a disulfide. Residue Asn183 is glycosylated (N-linked (GlcNAc...) asparagine). Residue Ser201 is the Nucleophile of the active site. N-linked (GlcNAc...) asparagine glycosylation is present at Asn316. Catalysis depends on residues Asp348 and His382. A disordered region spans residues Ser461–Ala488. Over residues Ser469–Lys480 the composition is skewed to basic residues.

Belongs to the AB hydrolase superfamily. Lipase family. Class Lip subfamily.

Its subcellular location is the secreted. The catalysed reaction is a triacylglycerol + H2O = a diacylglycerol + a fatty acid + H(+). It catalyses the reaction a monoacylglycerol + H2O = glycerol + a fatty acid + H(+). The enzyme catalyses a diacylglycerol + H2O = a monoacylglycerol + a fatty acid + H(+). Inhibited by different metal ions including Fe(2+), Fe(3+), Cu(2+), and Zn(2+). The monovalent ions Na(+) and K(+) exhibit less dramatic inhibition. Its function is as follows. Secreted lipase that releases free fatty acids from monoacylglycerol and triacylglycerol but has no phospholipase or lysophospholipase activities. Has minor esterase activity. Due to an absence of fatty acid synthase genes in Malassezia species, secretory lipases are essential for the yeast to generate free fatty acids from degradation of sebum and assimilate them as lipid sources for growth. Plays important roles not only in lipid metabolism but also in the immune response of host cells and pathogenesis. Hydrolyzes lipids, such as Tween 20, 40 and 80, with Tween 80 being the best substrate. The chain is Secreted triacylglycerol lipase LIP1 from Malassezia furfur (Pityriasis versicolor infection agent).